Reading from the N-terminus, the 444-residue chain is Killer cell immunoglobulin-like receptor 3DL1 (444 aa).

The first 21 residues, 1–21, serve as a signal peptide directing secretion; that stretch reads MSLMVVSMACVGLFLVQRAGP. The Extracellular segment spans residues 22-340; it reads HMGGQDKPFL…SKSGNPRHLH (319 aa). 3 consecutive Ig-like C2-type domains span residues 42-102, 137-202, and 237-300; these read GGHV…HPHS, GERV…VTHT, and GESV…FRHS. 3 disulfides stabilise this stretch: C49/C95, C144/C195, and C244/C293. Residues N92, N179, and N273 are each glycosylated (N-linked (GlcNAc...) asparagine). The disordered stretch occupies residues 315–334; the sequence is VTGNPSSSWPSPTEPSSKSG. Over residues 319-333 the composition is skewed to low complexity; the sequence is PSSSWPSPTEPSSKS. A helical transmembrane segment spans residues 341–360; that stretch reads ILIGTSVVIILFILLLFFLL. The Cytoplasmic segment spans residues 361-444; that stretch reads HLWCSNKKNA…KPRSKVVSCP (84 aa). Disordered regions lie at residues 375-394 and 409-444; these read QEPA…QDPE and RKIT…VSCP.

The protein belongs to the immunoglobulin superfamily.

It localises to the cell membrane. Receptor on natural killer (NK) cells for HLA Bw4 allele. Inhibits the activity of NK cells thus preventing cell lysis. This Homo sapiens (Human) protein is Killer cell immunoglobulin-like receptor 3DL1.